The following is an 82-amino-acid chain: Protein RALF-like 8 (82 aa).

An N-terminal signal peptide occupies residues M1–A28. Disulfide bonds link C47-C55 and C67-C73.

This sequence belongs to the plant rapid alkalinization factor (RALF) family. In terms of tissue distribution, expressed in leaves and flowers.

It is found in the secreted. Functionally, cell signaling peptide that may regulate plant stress, growth, and development. Mediates a rapid alkalinization of extracellular space by mediating a transient increase in the cytoplasmic Ca(2+) concentration leading to a calcium-dependent signaling events through a cell surface receptor and a concomitant activation of some intracellular mitogen-activated protein kinases. This chain is Protein RALF-like 8 (RALFL8), found in Arabidopsis thaliana (Mouse-ear cress).